Reading from the N-terminus, the 600-residue chain is MVSFTLRAIGACLIGLPALITAAPTSHVSNDFHVVEQLNGVPQGWVQEGSPAPSTQMKFKLALVQGKTAEFEQRVMDISNPKHADYGKFMSREELDAFLQPSSQVKDSVFNWLASEGISKRSVKANTDWLTFTTSIATAEKLFNTRFYTFKNTADGSQIIRTLKYSVAASAAPYVQMVQPTTKFSAPRPELSSVFTSDLEITSSANVDCNVTITPDCIRELYKMGNTFAKKDPRNRLGISGYLEQYARLDDFSTFIDMFVPSLKGTTFDFKSIEGAKNEQNSSLDSVEASLDVDYAIGLSGALSTYYGTAGRGKLIPDLDQPNITENNNEPYIEQLFYLLDLPDSELPAVLSTSYGENEQSVPPTYSSVVCSLFGRLGARGVSVIFSSGDTGVGSACQSNDGKNTTKFNPIFPAACPFVTSVGGTRQINPEVAIHFSSGGFSERFARPWYQELDVRHYLGHELEKGKWDGMYNPYGRGFPDVAAQSYKFATRDHGKTIGVSGTSASAPLFAGVVSILNSIRLAHNKPRMGFLNPWLYTIGRSGFTDIVHGGSDGCTGTDMYSHLPTPYVPGASWNATKGWDPVTGLGTPNFEKLSKLVLI.

The first 22 residues, 1 to 22 (MVSFTLRAIGACLIGLPALITA), serve as a signal peptide directing secretion. Positions 23–202 (APTSHVSNDF…SVFTSDLEIT (180 aa)) are cleaved as a propeptide — removed in mature form. Residues N210 and N281 are each glycosylated (N-linked (GlcNAc...) asparagine). Residues 212–600 (TITPDCIREL…FEKLSKLVLI (389 aa)) form the Peptidase S53 domain. Catalysis depends on charge relay system residues E288 and D292. Residues N323 and N404 are each glycosylated (N-linked (GlcNAc...) asparagine). S504 (charge relay system) is an active-site residue. Ca(2+) contacts are provided by D546 and I547. A glycan (N-linked (GlcNAc...) asparagine) is linked at N575. Positions 579 and 581 each coordinate Ca(2+).

Ca(2+) serves as cofactor.

It localises to the secreted. It is found in the extracellular space. It carries out the reaction Release of an N-terminal tripeptide from a polypeptide.. Its function is as follows. Secreted tripeptidyl-peptidase which degrades proteins at acidic pHs and is involved in virulence. The sequence is that of Probable tripeptidyl-peptidase SED4 (SED4) from Arthroderma benhamiae (strain ATCC MYA-4681 / CBS 112371) (Trichophyton mentagrophytes).